A 103-amino-acid chain; its full sequence is MIPGEILFADGPVAYNEGREVTRLTVLNAADRPVQVGSHYHFAEANPGLDFDRAAARGKRLNVAAGTAVRFEPGIPVDVELVPLAGARVVPGLRGETGGALDA.

It belongs to the urease beta subunit family. As to quaternary structure, heterotrimer of UreA (gamma), UreB (beta) and UreC (alpha) subunits. Three heterotrimers associate to form the active enzyme.

The protein localises to the cytoplasm. The catalysed reaction is urea + 2 H2O + H(+) = hydrogencarbonate + 2 NH4(+). It functions in the pathway nitrogen metabolism; urea degradation; CO(2) and NH(3) from urea (urease route): step 1/1. The sequence is that of Urease subunit beta from Streptomyces avermitilis (strain ATCC 31267 / DSM 46492 / JCM 5070 / NBRC 14893 / NCIMB 12804 / NRRL 8165 / MA-4680).